The sequence spans 314 residues: Olfactory receptor 1Q1 (314 aa).

Residues 1 to 25 (MDNSNWTSVSHFVLLGISTHPEEQI) are Extracellular-facing. Asn5 is a glycosylation site (N-linked (GlcNAc...) asparagine). Residues 26–49 (PLFLVFSLMYAINISGNLAIITLI) traverse the membrane as a helical segment. Topologically, residues 50 to 57 (LSAPRLHI) are cytoplasmic. The chain crosses the membrane as a helical span at residues 58–79 (PMYIFLSNLALTDICFTSTTVP). Topologically, residues 80-100 (KMLQIIFSPTKVISYTGCLAQ) are extracellular. Cys97 and Cys189 are joined by a disulfide. Residues 101-120 (TYFFICFAVMENFILAVMAY) form a helical membrane-spanning segment. Residues 121 to 139 (DRYIAICHPFHYTMILTRM) are Cytoplasmic-facing. The chain crosses the membrane as a helical span at residues 140-158 (LCVKMVVMCHALSHLHAML). The Extracellular portion of the chain corresponds to 159 to 195 (HTFLIGQLIFCADNRIPHFFCDLYALMKISCTSTYLN). The helical transmembrane segment at 196 to 219 (TLMIHTEGAVVISGALAFITASYA) threads the bilayer. Over 220–236 (CIILVVLRIPSAKGRWK) the chain is Cytoplasmic. Residues 237 to 259 (TFSTCGSHLTVVAIFYGTLSWVY) form a helical membrane-spanning segment. Over 260–272 (FRPLSSYSVTKGR) the chain is Extracellular. Residues 273–292 (IITVVYTVVTPMLNPFIYSL) form a helical membrane-spanning segment. The Cytoplasmic segment spans residues 293-314 (RNGDVKGGFMKWMSRMQTFFFR).

The protein belongs to the G-protein coupled receptor 1 family.

It is found in the cell membrane. Functionally, odorant receptor. The chain is Olfactory receptor 1Q1 (OR1Q1) from Homo sapiens (Human).